A 170-amino-acid polypeptide reads, in one-letter code: MSLPNPAELLPRMASDLRAHLAERGIERPRFVGIHTGGIWVAEALLRELGNQEPLGTLDVSFYRDDFTQNGLHPQVRPSALPFEIDGQHLVLVDDVLMSGRTIRAALNELFDYGRPASVTLVCLLDLNARELPIRPDVVGQTLSLGRDERVKLVGPAPLALERKVLSSAS.

Positions 90 to 102 (LVLVDDVLMSGRT) match the PRPP-binding motif.

This sequence belongs to the purine/pyrimidine phosphoribosyltransferase family. PyrR subfamily.

The catalysed reaction is UMP + diphosphate = 5-phospho-alpha-D-ribose 1-diphosphate + uracil. Its function is as follows. Regulates the transcription of the pyrimidine nucleotide (pyr) operon in response to exogenous pyrimidines. Also displays a weak uracil phosphoribosyltransferase activity which is not physiologically significant. The protein is Bifunctional protein PyrR of Pseudomonas aeruginosa (strain LESB58).